The chain runs to 226 residues: Lipoprotein-releasing system ATP-binding protein LolD (226 aa).

The ABC transporter domain occupies 6–226 (LKLDNIRRAF…KMSEGLLVEV (221 aa)). 42–49 (GPSGAGKS) contacts ATP.

The protein belongs to the ABC transporter superfamily. Lipoprotein translocase (TC 3.A.1.125) family. In terms of assembly, the complex is composed of two ATP-binding proteins (LolD) and two transmembrane proteins (LolC and LolE).

The protein resides in the cell inner membrane. Part of the ABC transporter complex LolCDE involved in the translocation of mature outer membrane-directed lipoproteins, from the inner membrane to the periplasmic chaperone, LolA. Responsible for the formation of the LolA-lipoprotein complex in an ATP-dependent manner. The chain is Lipoprotein-releasing system ATP-binding protein LolD from Paramagnetospirillum magneticum (strain ATCC 700264 / AMB-1) (Magnetospirillum magneticum).